Reading from the N-terminus, the 545-residue chain is Chaperonin GroEL (545 aa).

ATP contacts are provided by residues threonine 30–proline 33, lysine 51, aspartate 87–threonine 91, glycine 415, asparagine 479–alanine 481, and aspartate 495. A disordered region spans residues lysine 526 to methionine 545.

The protein belongs to the chaperonin (HSP60) family. As to quaternary structure, forms a cylinder of 14 subunits composed of two heptameric rings stacked back-to-back. Interacts with the co-chaperonin GroES.

Its subcellular location is the cytoplasm. It catalyses the reaction ATP + H2O + a folded polypeptide = ADP + phosphate + an unfolded polypeptide.. Its function is as follows. Together with its co-chaperonin GroES, plays an essential role in assisting protein folding. The GroEL-GroES system forms a nano-cage that allows encapsulation of the non-native substrate proteins and provides a physical environment optimized to promote and accelerate protein folding. This is Chaperonin GroEL from Paracidovorax citrulli (strain AAC00-1) (Acidovorax citrulli).